The sequence spans 311 residues: T-cell acute lymphocytic leukemia protein 1 homolog (311 aa).

Residues methionine 1–serine 14 show a composition bias toward pro residues. The disordered stretch occupies residues methionine 1–alanine 67. The segment covering aspartate 15 to glutamate 25 has biased composition (basic and acidic residues). In terms of domain architecture, bHLH spans valine 179 to leucine 231. Residues serine 265–arginine 311 form a disordered region. The span at threonine 284–histidine 294 shows a compositional bias: basic and acidic residues.

Efficient DNA binding requires dimerization with another bHLH protein. Forms heterodimers with TCF3. Post-translationally, phosphorylated on serine residues.

It is found in the nucleus. In terms of biological role, implicated in the genesis of hemopoietic malignancies. It may play an important role in hemopoietic differentiation. The sequence is that of T-cell acute lymphocytic leukemia protein 1 homolog (TAL1) from Gallus gallus (Chicken).